The following is a 365-amino-acid chain: tRNA/tmRNA (uracil-C(5))-methyltransferase (365 aa).

S-adenosyl-L-methionine contacts are provided by Q189, Y217, N222, E238, and D298. C323 (nucleophile) is an active-site residue. E357 functions as the Proton acceptor in the catalytic mechanism.

This sequence belongs to the class I-like SAM-binding methyltransferase superfamily. RNA M5U methyltransferase family. TrmA subfamily.

The catalysed reaction is uridine(54) in tRNA + S-adenosyl-L-methionine = 5-methyluridine(54) in tRNA + S-adenosyl-L-homocysteine + H(+). It carries out the reaction uridine(341) in tmRNA + S-adenosyl-L-methionine = 5-methyluridine(341) in tmRNA + S-adenosyl-L-homocysteine + H(+). In terms of biological role, dual-specificity methyltransferase that catalyzes the formation of 5-methyluridine at position 54 (m5U54) in all tRNAs, and that of position 341 (m5U341) in tmRNA (transfer-mRNA). The protein is tRNA/tmRNA (uracil-C(5))-methyltransferase of Shewanella halifaxensis (strain HAW-EB4).